An 830-amino-acid polypeptide reads, in one-letter code: Ribosome biogenesis protein ERB1 (830 aa).

A disordered region spans residues 1–142; it reads MAPQPLKVGT…NKDLPVDEKL (142 aa). 2 stretches are compositionally biased toward acidic residues: residues 35–44 and 52–109; these read VSEESDEEFG and MSDD…DSDS. Over residues 131-142 the composition is skewed to basic and acidic residues; that stretch reads EENKDLPVDEKL. WD repeat units lie at residues 481–520, 523–563, 660–698, 701–740, 744–783, and 799–830; these read PGDT…EVWR, LHAG…APHI, KTPG…LIRT, SGVK…KPYK, YHNR…DLMQ, and IDGI…LWCS.

This sequence belongs to the WD repeat BOP1/ERB1 family. Component of the NOP7 complex, composed of ERB1, NOP7 and YTM1. The complex is held together by ERB1, which interacts with NOP7 via its N-terminal domain and with YTM1 via a high-affinity interaction between the seven-bladed beta-propeller domains of the 2 proteins. The NOP7 complex associates with the 66S pre-ribosome.

It is found in the nucleus. The protein localises to the nucleolus. The protein resides in the nucleoplasm. Functionally, component of the NOP7 complex, which is required for maturation of the 25S and 5.8S ribosomal RNAs and formation of the 60S ribosome. The polypeptide is Ribosome biogenesis protein ERB1 (Cryptococcus neoformans var. neoformans serotype D (strain JEC21 / ATCC MYA-565) (Filobasidiella neoformans)).